A 242-amino-acid polypeptide reads, in one-letter code: Universal stress protein PHOS32 (242 aa).

A chloroplast-targeting transit peptide spans 1–43 (MNPADSDHPQLPNIKIHHPPSPRHSHHHHSSSTPSSAATPTPT). A disordered region spans residues 1 to 45 (MNPADSDHPQLPNIKIHHPPSPRHSHHHHSSSTPSSAATPTPTAG). Residues 15–30 (KIHHPPSPRHSHHHHS) are compositionally biased toward basic residues. P19 is a binding site for ATP. At S21 the chain carries Phosphoserine; by MAPK3 and MAPK6. Residues 31–44 (SSTPSSAATPTPTA) show a composition bias toward low complexity. ATP-binding positions include V83, 168–178 (GSRGFGAEKKR), and 186–188 (SVS). A Phosphoserine modification is found at S219.

This sequence belongs to the universal stress protein A family. Post-translationally, phosphorylated by MAPK3 and MAPK6 after pathogenic elicitation (e.g. bacterial flg22, Phytophthora infestans zoospores and xylanase).

Its subcellular location is the plastid. It localises to the chloroplast. The chain is Universal stress protein PHOS32 from Arabidopsis thaliana (Mouse-ear cress).